The primary structure comprises 540 residues: Glucose-6-phosphate isomerase (540 aa).

The active-site Proton donor is E350. Active-site residues include H381 and K503.

The protein belongs to the GPI family.

Its subcellular location is the cytoplasm. The enzyme catalyses alpha-D-glucose 6-phosphate = beta-D-fructose 6-phosphate. It participates in carbohydrate biosynthesis; gluconeogenesis. The protein operates within carbohydrate degradation; glycolysis; D-glyceraldehyde 3-phosphate and glycerone phosphate from D-glucose: step 2/4. Catalyzes the reversible isomerization of glucose-6-phosphate to fructose-6-phosphate. The polypeptide is Glucose-6-phosphate isomerase (Burkholderia pseudomallei (strain 1710b)).